We begin with the raw amino-acid sequence, 327 residues long: Glycerol-3-phosphate dehydrogenase [NAD(P)+] (327 aa).

NADPH contacts are provided by W11, H30, and K103. K103, G131, and S133 together coordinate sn-glycerol 3-phosphate. Residue A135 coordinates NADPH. Sn-glycerol 3-phosphate contacts are provided by K186, D243, S253, R254, and N255. Catalysis depends on K186, which acts as the Proton acceptor. Residue R254 coordinates NADPH. Residues V281 and E283 each coordinate NADPH.

It belongs to the NAD-dependent glycerol-3-phosphate dehydrogenase family.

The protein resides in the cytoplasm. It carries out the reaction sn-glycerol 3-phosphate + NAD(+) = dihydroxyacetone phosphate + NADH + H(+). It catalyses the reaction sn-glycerol 3-phosphate + NADP(+) = dihydroxyacetone phosphate + NADPH + H(+). It participates in membrane lipid metabolism; glycerophospholipid metabolism. Functionally, catalyzes the reduction of the glycolytic intermediate dihydroxyacetone phosphate (DHAP) to sn-glycerol 3-phosphate (G3P), the key precursor for phospholipid synthesis. The sequence is that of Glycerol-3-phosphate dehydrogenase [NAD(P)+] from Wolbachia pipientis wMel.